A 431-amino-acid chain; its full sequence is Interleukin-11 receptor subunit alpha (431 aa).

The first 23 residues, 1–23, serve as a signal peptide directing secretion; the sequence is MSSSRSGLTRVLVAVATALVSSS. At 24–371 the chain is on the extracellular side; that stretch reads TPCPQAWGPP…DPLEQVAVLA (348 aa). Positions 27 to 110 constitute an Ig-like C2-type domain; sequence PQAWGPPGVQ…FGGMVTLKLG (84 aa). 3 disulfides stabilise this stretch: Cys-48–Cys-94, Cys-120–Cys-130, and Cys-170–Cys-180. Fibronectin type-III domains are found at residues 112-219 and 220-317; these read PPAR…LRPD and PPQG…TPST. Asn-127 carries N-linked (GlcNAc...) asparagine glycosylation. The tract at residues 151 to 170 is disordered; that stretch reads KTLPGAESQRESPSTGPWPC. The N-linked (GlcNAc...) asparagine glycan is linked to Asn-194. Residues 304 to 308 carry the WSXWS motif motif; sequence WSAWS. The interval 310–360 is disordered; that stretch reads EAWGTPSTGPLRDEVPDGSRGHEQKLEAAAQEDSPAPPSPSLQPDPRPLDH. The span at 320 to 335 shows a compositional bias: basic and acidic residues; sequence LRDEVPDGSRGHEQKL. Residues 344–355 show a composition bias toward pro residues; the sequence is PAPPSPSLQPDP. The helical transmembrane segment at 372–392 threads the bilayer; that stretch reads SLGIFSFLGLAVGALALGLWL. Residues 393–431 lie on the Cytoplasmic side of the membrane; sequence RLRRSGKDGPQKPGFLAPMIPGDKLPGIPNLQRTPENFS. Positions 402 to 431 are disordered; it reads PQKPGFLAPMIPGDKLPGIPNLQRTPENFS.

Belongs to the type I cytokine receptor family. Type 3 subfamily. In terms of assembly, on IL11 binding, forms a multimer complex with IL6ST/gp130. A short soluble form is also released from the membrane by proteolysis. The sIL11RA is formed either by limited proteolysis of membrane-bound receptors, a process referred to as ectodomain shedding, or directly secreted from the cells after alternative mRNA splicing. mIL11RA is cleaved by the proteases ADAM10, ELANE and PRTN3.

It localises to the membrane. The protein resides in the secreted. In terms of biological role, receptor for interleukin-11 (IL11). The receptor systems for IL6, LIF, OSM, CNTF, IL11 and CT1 can utilize IL6ST for initiating signal transmission. The IL11/IL11RA/IL6ST complex may be involved in the control of proliferation and/or differentiation of skeletogenic progenitor or other mesenchymal cells. Essential for the normal development of craniofacial bones and teeth. Restricts suture fusion and tooth number. Its function is as follows. Soluble form of IL11 receptor (sIL11RA) that acts as an agonist of IL11 activity. The IL11:sIL11RA complex binds to IL6ST/gp130 on cell surfaces and induces signaling also on cells that do not express membrane-bound IL11RA in a process called IL11 trans-signaling. The chain is Interleukin-11 receptor subunit alpha from Rattus norvegicus (Rat).